We begin with the raw amino-acid sequence, 207 residues long: LysM and putative peptidoglycan-binding domain-containing protein 2 (207 aa).

The 45-residue stretch at 61–105 (IEHRLSPSDTLQGIALKYGVTMEQIKRANKLFSTDCIFLRKSLNI) folds into the LysM domain. The tract at residues 186-207 (AQRLKEEDLRHDDSYATCSYQH) is disordered. The segment covering 188 to 199 (RLKEEDLRHDDS) has biased composition (basic and acidic residues).

This is LysM and putative peptidoglycan-binding domain-containing protein 2 (lysmd2) from Xenopus tropicalis (Western clawed frog).